Reading from the N-terminus, the 191-residue chain is Imidazoleglycerol-phosphate dehydratase (191 aa).

Belongs to the imidazoleglycerol-phosphate dehydratase family.

The protein resides in the cytoplasm. It carries out the reaction D-erythro-1-(imidazol-4-yl)glycerol 3-phosphate = 3-(imidazol-4-yl)-2-oxopropyl phosphate + H2O. Its pathway is amino-acid biosynthesis; L-histidine biosynthesis; L-histidine from 5-phospho-alpha-D-ribose 1-diphosphate: step 6/9. The polypeptide is Imidazoleglycerol-phosphate dehydratase (Methanosarcina mazei (strain ATCC BAA-159 / DSM 3647 / Goe1 / Go1 / JCM 11833 / OCM 88) (Methanosarcina frisia)).